Consider the following 526-residue polypeptide: PTS system alpha-glucoside-specific EIICB component (526 aa).

Residues 1-417 (MLKHFQRLGG…YNVKTSGRED (417 aa)) form the PTS EIIC type-1 domain. Helical transmembrane passes span 12 to 32 (LFAP…TIIL), 59 to 79 (GWTV…IGLA), 88 to 108 (LAVL…LTFW), 132 to 152 (IKTL…TIYI), 173 to 193 (LVSA…CLVW), 200 to 220 (ISSL…LYTF), 224 to 244 (ILIP…GPAV), 274 to 294 (GGFA…ALAM), 305 to 325 (IVSG…ITEP), 330 to 350 (FLFI…TMAA), 355 to 375 (FGVV…WLPL), and 381 to 401 (GVMF…YLVF). Residues 447 to 526 (SGKAKAFLEA…ESFENLMEQN (80 aa)) form the PTS EIIB type-1 domain. The active-site Phosphocysteine intermediate; for EIIB activity is cysteine 469.

It is found in the cell membrane. In terms of biological role, the phosphoenolpyruvate-dependent sugar phosphotransferase system (sugar PTS), a major carbohydrate active -transport system, catalyzes the phosphorylation of incoming sugar substrates concomitantly with their translocation across the cell membrane. This system is involved in alpha-glucoside transport. This is PTS system alpha-glucoside-specific EIICB component (malB) from Fusobacterium mortiferum.